The sequence spans 86 residues: MQDRGDKPERRSRKGRRPRRRICFFCVDKIETVDYKEVGKLRKYITERGKILPRRVSGCCAKHQRQLTNAIKRARHVALLPFTVNE.

It belongs to the bacterial ribosomal protein bS18 family. In terms of assembly, part of the 30S ribosomal subunit. Forms a tight heterodimer with protein bS6.

In terms of biological role, binds as a heterodimer with protein bS6 to the central domain of the 16S rRNA, where it helps stabilize the platform of the 30S subunit. In Heliobacterium modesticaldum (strain ATCC 51547 / Ice1), this protein is Small ribosomal subunit protein bS18.